A 365-amino-acid polypeptide reads, in one-letter code: UDP-N-acetylglucosamine--N-acetylmuramyl-(pentapeptide) pyrophosphoryl-undecaprenol N-acetylglucosamine transferase (365 aa).

UDP-N-acetyl-alpha-D-glucosamine is bound by residues 17 to 19, N129, R167, S194, I250, 269 to 274, and Q295; these read TGG and ALTVSE.

The protein belongs to the glycosyltransferase 28 family. MurG subfamily.

It localises to the cell inner membrane. It catalyses the reaction di-trans,octa-cis-undecaprenyl diphospho-N-acetyl-alpha-D-muramoyl-L-alanyl-D-glutamyl-meso-2,6-diaminopimeloyl-D-alanyl-D-alanine + UDP-N-acetyl-alpha-D-glucosamine = di-trans,octa-cis-undecaprenyl diphospho-[N-acetyl-alpha-D-glucosaminyl-(1-&gt;4)]-N-acetyl-alpha-D-muramoyl-L-alanyl-D-glutamyl-meso-2,6-diaminopimeloyl-D-alanyl-D-alanine + UDP + H(+). Its pathway is cell wall biogenesis; peptidoglycan biosynthesis. Cell wall formation. Catalyzes the transfer of a GlcNAc subunit on undecaprenyl-pyrophosphoryl-MurNAc-pentapeptide (lipid intermediate I) to form undecaprenyl-pyrophosphoryl-MurNAc-(pentapeptide)GlcNAc (lipid intermediate II). This chain is UDP-N-acetylglucosamine--N-acetylmuramyl-(pentapeptide) pyrophosphoryl-undecaprenol N-acetylglucosamine transferase, found in Shewanella pealeana (strain ATCC 700345 / ANG-SQ1).